We begin with the raw amino-acid sequence, 397 residues long: Tryptophan synthase beta chain (397 aa).

An N6-(pyridoxal phosphate)lysine modification is found at Lys-91.

Belongs to the TrpB family. As to quaternary structure, tetramer of two alpha and two beta chains. Requires pyridoxal 5'-phosphate as cofactor.

The enzyme catalyses (1S,2R)-1-C-(indol-3-yl)glycerol 3-phosphate + L-serine = D-glyceraldehyde 3-phosphate + L-tryptophan + H2O. Its pathway is amino-acid biosynthesis; L-tryptophan biosynthesis; L-tryptophan from chorismate: step 5/5. Functionally, the beta subunit is responsible for the synthesis of L-tryptophan from indole and L-serine. This Bacillus thuringiensis (strain Al Hakam) protein is Tryptophan synthase beta chain.